The following is a 314-amino-acid chain: Mitochondrial 2-oxoglutarate/malate carrier protein (314 aa).

An N-acetylalanine modification is found at A2. S6 carries the post-translational modification Phosphoserine. 3 Solcar repeats span residues 23–108, 117–208, and 217–306; these read VKFL…LFER, PGFL…SKQF, and DNIL…MNKA. Residues 24–42 traverse the membrane as a helical segment; it reads KFLFGGLAGMGATVFVQPL. K57 carries the N6-succinyllysine modification. Position 73 is an N6-acetyllysine (K73). A helical membrane pass occupies residues 83-101; that stretch reads GLSAGLLRQATYTTTRLGI. Position 102 is a phosphotyrosine (Y102). The next 3 helical transmembrane spans lie at 119-140, 183-202, and 222-240; these read FLLK…GTPA, GCIP…LASY, and HFCA…SMPV. K256 carries the N6-acetyllysine modification. The chain crosses the membrane as a helical span at residues 281–300; it reads GFTPYYARLGPHTVLTFIFL.

The protein belongs to the mitochondrial carrier (TC 2.A.29) family. In terms of assembly, interacts with SMIM26.

Its subcellular location is the mitochondrion inner membrane. It carries out the reaction (S)-malate(in) + 2-oxoglutarate(out) = (S)-malate(out) + 2-oxoglutarate(in). It catalyses the reaction malonate(in) + 2-oxoglutarate(out) = malonate(out) + 2-oxoglutarate(in). The enzyme catalyses succinate(in) + 2-oxoglutarate(out) = succinate(out) + 2-oxoglutarate(in). The catalysed reaction is maleate(in) + 2-oxoglutarate(out) = maleate(out) + 2-oxoglutarate(in). It carries out the reaction oxaloacetate(in) + 2-oxoglutarate(out) = oxaloacetate(out) + 2-oxoglutarate(in). Functionally, catalyzes the transport of 2-oxoglutarate (alpha-oxoglutarate) across the inner mitochondrial membrane in an electroneutral exchange for malate. Can also exchange 2-oxoglutarate for other dicarboxylic acids such as malonate, succinate, maleate and oxaloacetate, although with lower affinity. Contributes to several metabolic processes, including the malate-aspartate shuttle, the oxoglutarate/isocitrate shuttle, in gluconeogenesis from lactate, and in nitrogen metabolism. Maintains mitochondrial fusion and fission events, and the organization and morphology of cristae. Involved in the regulation of apoptosis. Helps protect from cytotoxic-induced apoptosis by modulating glutathione levels in mitochondria. The chain is Mitochondrial 2-oxoglutarate/malate carrier protein (Slc25a11) from Mus musculus (Mouse).